The following is a 383-amino-acid chain: Chaperone protein DnaJ (383 aa).

The J domain maps to 5–70 (DYYKTLGVTQ…KKRTAYDQYG (66 aa)). The segment at 137–215 (GTIKEIKIPT…CHGNGRIEIS (79 aa)) adopts a CR-type zinc-finger fold. Zn(2+) is bound by residues cysteine 150, cysteine 153, cysteine 167, cysteine 170, cysteine 189, cysteine 192, cysteine 203, and cysteine 206. CXXCXGXG motif repeat units lie at residues 150-157 (CPTCYGYG), 167-174 (CPTCRGNG), 189-196 (CPQCHGEG), and 203-210 (CRRCHGNG).

This sequence belongs to the DnaJ family. As to quaternary structure, homodimer. Requires Zn(2+) as cofactor.

Its subcellular location is the cytoplasm. In terms of biological role, participates actively in the response to hyperosmotic and heat shock by preventing the aggregation of stress-denatured proteins and by disaggregating proteins, also in an autonomous, DnaK-independent fashion. Unfolded proteins bind initially to DnaJ; upon interaction with the DnaJ-bound protein, DnaK hydrolyzes its bound ATP, resulting in the formation of a stable complex. GrpE releases ADP from DnaK; ATP binding to DnaK triggers the release of the substrate protein, thus completing the reaction cycle. Several rounds of ATP-dependent interactions between DnaJ, DnaK and GrpE are required for fully efficient folding. Also involved, together with DnaK and GrpE, in the DNA replication of plasmids through activation of initiation proteins. This Buchnera aphidicola subsp. Baizongia pistaciae (strain Bp) protein is Chaperone protein DnaJ.